Consider the following 449-residue polypeptide: Chlorobenzene dioxygenase subunit alpha (449 aa).

Residues 54 to 163 form the Rieske domain; sequence WLLLGHETQI…VATYKGLIFA (110 aa). Cys-96, His-98, Cys-116, and His-119 together coordinate [2Fe-2S] cluster. Residues His-222, His-228, and Asp-376 each coordinate Fe cation.

It belongs to the bacterial ring-hydroxylating dioxygenase alpha subunit family. This dioxygenase system consists of four proteins: the two subunits of the oxygenase component (TecA1 and TecA2), a ferredoxin (TecA3) and a ferredoxin reductase (TecA4). Requires [2Fe-2S] cluster as cofactor. Fe cation serves as cofactor.

The enzyme catalyses chlorobenzene + NADH + O2 + H(+) = (1R,2R)-3-chlorocyclohexa-3,5-diene-1,2-diol + NAD(+). It participates in aromatic compound metabolism. Functionally, part of the oxygenase component of the chlorobenzene dioxygenase system that catalyzes the dihydroxylation of a range of aromatic compounds, including chlorinated benzenes and toluenes, and dinuclear aromatics such as biphenyl and dibenzo-p-dioxin. The alpha subunit is responsible for substrate specificity. This is Chlorobenzene dioxygenase subunit alpha from Cupriavidus sp. (strain PS12).